The primary structure comprises 149 residues: 18 kDa antigen 1 (149 aa).

Positions Thr21–Gly131 constitute a sHSP domain.

The protein belongs to the small heat shock protein (HSP20) family.

Its function is as follows. Not known. This protein is one of the major immune reactive proteins in mycobacteria. The polypeptide is 18 kDa antigen 1 (Mycobacterium intracellulare).